A 970-amino-acid polypeptide reads, in one-letter code: Sodium/calcium exchanger 1 (970 aa).

Residues 1–32 (MLRLSLPPNVSMGFRLVALVALLFSHVDHITA) form the signal peptide. Topologically, residues 33–71 (DTEAETGGNETTECTGSYYCKKGVILPIWEPQDPSFGDK) are extracellular. The N-linked (GlcNAc...) asparagine glycan is linked to Asn41. Residues 72–92 (IARATVYFVAMVYMFLGVSII) form a helical membrane-spanning segment. The Cytoplasmic portion of the chain corresponds to 93-133 (ADRFMSSIEVITSQEKEITIKKPNGETTKTTVRIWNETVSN). Residues 134–154 (LTLMALGSSAPEILLSVIEVC) traverse the membrane as a helical segment. One copy of the Alpha-1 repeat lies at 138–178 (ALGSSAPEILLSVIEVCGHNFTAGDLGPSTIVGSAAFNMFI). At 155 to 167 (GHNFTAGDLGPST) the chain is on the extracellular side. An N-linked (GlcNAc...) asparagine glycan is attached at Asn157. A helical transmembrane segment spans residues 168 to 188 (IVGSAAFNMFIIIALCVYVVP). At 189-201 (DGETRKIKHLRVF) the chain is on the cytoplasmic side. The helical transmembrane segment at 202-222 (FVTAAWSIFAYTWLYIILSVS) threads the bilayer. Over 223-228 (SPGVVE) the chain is Extracellular. Residues 229–249 (VWEGLLTFFFFPICVVFAWVA) traverse the membrane as a helical segment. Over 250–797 (DRRLLFYKYV…FVPPTEYWNG (548 aa)) the chain is Cytoplasmic. The segment at 251-270 (RRLLFYKYVYKRYRAGKQRG) is putative calmodulin-binding region. Residues Ser282 and Ser389 each carry the phosphoserine modification. Calx-beta domains lie at 393-493 (VNME…VHLS) and 524-624 (ATIT…IEIG). Residues Glu417, Asp453, Asp478, Asp479, Ile481, Glu483, Glu486, Asp530, Asp531, Asp532, Glu548, Asp584, Asp610, Glu611, Glu612, and Glu715 each contribute to the Ca(2+) site. The chain crosses the membrane as a helical span at residues 798–818 (WACFIVSILMIGLLTAFIGDL). Residues 819-821 (ASH) are Extracellular-facing. A helical transmembrane segment spans residues 822 to 842 (FGCTIGLKDSVTAVVFVALGT). One copy of the Alpha-2 repeat lies at 839-875 (ALGTSVPDTFASKVAATQDQYADASIGNVTGSNAVNV). Over 843-871 (SVPDTFASKVAATQDQYADASIGNVTGSN) the chain is Cytoplasmic. A helical membrane pass occupies residues 872-892 (AVNVFLGIGVAWSIAAIYHAA). Residues 893–903 (NGEQFKVSPGT) are Extracellular-facing. The chain crosses the membrane as a helical span at residues 904–924 (LAFSVTLFTIFAFINVGVLLY). The Cytoplasmic segment spans residues 925–941 (RRRPEIGGELGGPRTAK). Residues 942–962 (LLTSSLFVLLWLLYIFFSSLE) form a helical membrane-spanning segment. Residues 963 to 970 (AYCHIKGF) are Extracellular-facing.

The protein belongs to the Ca(2+):cation antiporter (CaCA) (TC 2.A.19) family. SLC8 subfamily. Detected in heart, kidney and brain (at protein level).

It localises to the cell membrane. It carries out the reaction Ca(2+)(in) + 3 Na(+)(out) = Ca(2+)(out) + 3 Na(+)(in). Its activity is regulated as follows. Activated by micromolar levels of Ca(2+). Its function is as follows. Mediates the exchange of one Ca(2+) ion against three to four Na(+) ions across the cell membrane, and thereby contributes to the regulation of cytoplasmic Ca(2+) levels and Ca(2+)-dependent cellular processes. Contributes to Ca(2+) transport during excitation-contraction coupling in muscle. In a first phase, voltage-gated channels mediate the rapid increase of cytoplasmic Ca(2+) levels due to release of Ca(2+) stores from the endoplasmic reticulum. SLC8A1 mediates the export of Ca(2+) from the cell during the next phase, so that cytoplasmic Ca(2+) levels rapidly return to baseline. Required for normal embryonic heart development and the onset of heart contractions. This Mus musculus (Mouse) protein is Sodium/calcium exchanger 1 (Slc8a1).